The chain runs to 205 residues: Imidazole glycerol phosphate synthase subunit HisH (205 aa).

The Glutamine amidotransferase type-1 domain occupies 1 to 205; that stretch reads MIALVDYGGG…FFKMALGDKK (205 aa). Residue Cys79 is the Nucleophile of the active site. Catalysis depends on residues His181 and Glu183.

As to quaternary structure, heterodimer of HisH and HisF.

It is found in the cytoplasm. It catalyses the reaction 5-[(5-phospho-1-deoxy-D-ribulos-1-ylimino)methylamino]-1-(5-phospho-beta-D-ribosyl)imidazole-4-carboxamide + L-glutamine = D-erythro-1-(imidazol-4-yl)glycerol 3-phosphate + 5-amino-1-(5-phospho-beta-D-ribosyl)imidazole-4-carboxamide + L-glutamate + H(+). The catalysed reaction is L-glutamine + H2O = L-glutamate + NH4(+). It participates in amino-acid biosynthesis; L-histidine biosynthesis; L-histidine from 5-phospho-alpha-D-ribose 1-diphosphate: step 5/9. Its function is as follows. IGPS catalyzes the conversion of PRFAR and glutamine to IGP, AICAR and glutamate. The HisH subunit catalyzes the hydrolysis of glutamine to glutamate and ammonia as part of the synthesis of IGP and AICAR. The resulting ammonia molecule is channeled to the active site of HisF. This chain is Imidazole glycerol phosphate synthase subunit HisH, found in Dehalococcoides mccartyi (strain ATCC BAA-2266 / KCTC 15142 / 195) (Dehalococcoides ethenogenes (strain 195)).